The chain runs to 198 residues: Glycerol-3-phosphate acyltransferase 3 (198 aa).

Transmembrane regions (helical) follow at residues 4–24, 71–91, 113–133, and 147–167; these read TYLL…LVVG, LPMV…AVLG, LLCY…TLLF, and VVAV…AMCL.

The protein belongs to the PlsY family. In terms of assembly, probably interacts with PlsX.

Its subcellular location is the cell membrane. The enzyme catalyses an acyl phosphate + sn-glycerol 3-phosphate = a 1-acyl-sn-glycero-3-phosphate + phosphate. It participates in lipid metabolism; phospholipid metabolism. Functionally, catalyzes the transfer of an acyl group from acyl-phosphate (acyl-PO(4)) to glycerol-3-phosphate (G3P) to form lysophosphatidic acid (LPA). This enzyme utilizes acyl-phosphate as fatty acyl donor, but not acyl-CoA or acyl-ACP. This chain is Glycerol-3-phosphate acyltransferase 3, found in Bacillus anthracis.